The following is a 483-amino-acid chain: Krueppel-like factor 4 (483 aa).

A disordered region spans residues 22–42 (TFASGPAGREKTLRPAGAPTN). A Glycyl lysine isopeptide (Lys-Gly) (interchain with G-Cter in ubiquitin) cross-link involves residue K32. Residues 99–107 (DLLDLDFIL) carry the 9aaTAD motif. The residue at position 251 (S251) is a Phosphoserine. A disordered region spans residues 294-395 (AGPQLSNGHR…KRGRRSWPRK (102 aa)). Residues 338–356 (LPLPPGFHPHPGPNYPPFL) show a composition bias toward pro residues. The residue at position 381 (E381) is a 5-glutamyl polyglutamate. A compositionally biased stretch (basic residues) spans 386-395 (KRGRRSWPRK). The interaction with ZNF296 stretch occupies residues 386–483 (KRGRRSWPRK…HLALHMKRHF (98 aa)). C2H2-type zinc fingers lie at residues 400–424 (HTCD…LRTH), 430–454 (YHCD…YRKH), and 460–482 (FQCQ…MKRH). The interval 443–474 (RSDELTRHYRKHTGHRPFQCQKCDRAFSRSDH) is interaction with target DNA.

Belongs to the krueppel C2H2-type zinc-finger protein family. Interacts with MUC1 (via the C-terminal domain). Interacts with POU5F1/OCT4 and SOX2. Interacts with MEIS2 isoform MeisD and PBX1 isoform PBX1a. Interacts with ZNF296. Interacts with GLIS1. Interacts with BTRC; this interaction leads to KLF4 ubiquitination and subsequent degradation. Interacts with IPO7; the interaction facilitates nuclear translocation of KLF4 in dental papilla cells. In terms of processing, ubiquitinated. 'Lys-48'-linked ubiquitinated and targeted for proteasomal degradation by the SCF(BTRC) E3 ubiquitin-protein ligase complex, thereby negatively regulating cell pluripotency maintenance and embryogenesis. Polyglutamylated by TTLL1 and TTLL4 at Glu-381, which inhibits KLF4 binding with E3 ligase component BTRC, thereby impeding ubiquitination. Deglutamylated by CCP1 and CCP6; deglutamylation promotes KLF4 ubiquitination. KLF4 glutamylation state plays a critical role in the regulation of its function in cell reprogramming, pluripotency maintenance and embryogenesis. Highest expression in the colon. Lower levels in testis, lung and small intestine.

It is found in the nucleus. Its subcellular location is the cytoplasm. Functionally, transcription factor; can act both as activator and as repressor. Binds the 5'-CACCC-3' core sequence. Binds to the promoter region of its own gene and can activate its own transcription. Regulates the expression of key transcription factors during embryonic development. Plays an important role in maintaining embryonic stem cells, and in preventing their differentiation. Required for establishing the barrier function of the skin and for postnatal maturation and maintenance of the ocular surface. Involved in the differentiation of epithelial cells and may also function in skeletal and kidney development. Contributes to the down-regulation of p53/TP53 transcription. In Mus musculus (Mouse), this protein is Krueppel-like factor 4 (Klf4).